Reading from the N-terminus, the 254-residue chain is Leucyl/phenylalanyl-tRNA--protein transferase (254 aa).

It belongs to the L/F-transferase family.

The protein resides in the cytoplasm. The enzyme catalyses N-terminal L-lysyl-[protein] + L-leucyl-tRNA(Leu) = N-terminal L-leucyl-L-lysyl-[protein] + tRNA(Leu) + H(+). The catalysed reaction is N-terminal L-arginyl-[protein] + L-leucyl-tRNA(Leu) = N-terminal L-leucyl-L-arginyl-[protein] + tRNA(Leu) + H(+). It carries out the reaction L-phenylalanyl-tRNA(Phe) + an N-terminal L-alpha-aminoacyl-[protein] = an N-terminal L-phenylalanyl-L-alpha-aminoacyl-[protein] + tRNA(Phe). Functions in the N-end rule pathway of protein degradation where it conjugates Leu, Phe and, less efficiently, Met from aminoacyl-tRNAs to the N-termini of proteins containing an N-terminal arginine or lysine. This is Leucyl/phenylalanyl-tRNA--protein transferase from Burkholderia orbicola (strain MC0-3).